We begin with the raw amino-acid sequence, 258 residues long: MLSRRIIPCLDVRDGRVVKGVRFRDHVDMGDIAELAQRYRDQGADELVFYDIGASPEARSVDVAWIERIARLIDIPFCVAGGIDSVETARRVLFAGADKVSINSPALGRPELITELADEFGVQCVVVGVDSVREADGQWRVRRFSGDPDKTQAVPLRTLDWIVDAQRRGAGEIVLNCMDSDGVRRGYDVVQLQQARALCQVPLIASGGAGAMEHFAEAFDQADVDGALAASVFHSGAIAIPELKRYLRGQQIEVRDVY.

Catalysis depends on residues Asp-11 and Asp-130.

This sequence belongs to the HisA/HisF family. Heterodimer of HisH and HisF.

The protein localises to the cytoplasm. It catalyses the reaction 5-[(5-phospho-1-deoxy-D-ribulos-1-ylimino)methylamino]-1-(5-phospho-beta-D-ribosyl)imidazole-4-carboxamide + L-glutamine = D-erythro-1-(imidazol-4-yl)glycerol 3-phosphate + 5-amino-1-(5-phospho-beta-D-ribosyl)imidazole-4-carboxamide + L-glutamate + H(+). It functions in the pathway amino-acid biosynthesis; L-histidine biosynthesis; L-histidine from 5-phospho-alpha-D-ribose 1-diphosphate: step 5/9. Its function is as follows. IGPS catalyzes the conversion of PRFAR and glutamine to IGP, AICAR and glutamate. The HisF subunit catalyzes the cyclization activity that produces IGP and AICAR from PRFAR using the ammonia provided by the HisH subunit. The chain is Imidazole glycerol phosphate synthase subunit HisF from Stenotrophomonas maltophilia (strain R551-3).